The primary structure comprises 640 residues: Probable potassium transport system protein Kup 3 (640 aa).

Residues 1 to 15 show a composition bias toward low complexity; that stretch reads MTVDAAATPAEAPAT. Positions 1–20 are disordered; that stretch reads MTVDAAATPAEAPATNGHGD. The next 12 helical transmembrane spans lie at 30-50, 71-91, 117-137, 155-175, 183-203, 224-244, 265-285, 294-314, 363-383, 385-405, 410-430, and 437-457; these read LTLG…LYAL, VISL…VVIL, ASII…DAVI, AAFD…LFAV, VAAF…IAAF, FMLH…LAVT, WLFV…ALII, PFFL…ATVA, LLLA…ALAS, YGIS…VVIW, WSPL…LTFL, and VLEG…LMYT.

Belongs to the HAK/KUP transporter (TC 2.A.72) family.

It is found in the cell inner membrane. The catalysed reaction is K(+)(in) + H(+)(in) = K(+)(out) + H(+)(out). Transport of potassium into the cell. Likely operates as a K(+):H(+) symporter. This Bradyrhizobium sp. (strain BTAi1 / ATCC BAA-1182) protein is Probable potassium transport system protein Kup 3.